We begin with the raw amino-acid sequence, 551 residues long: GMP synthase [glutamine-hydrolyzing] (551 aa).

Positions 1-28 (MTSSPTAAARTEGEAAPTVPTQVESGTA) are disordered. Positions 19-28 (VPTQVESGTA) are enriched in polar residues. Residues 37-227 (MVAILDFGSQ…VYHICGCEPE (191 aa)) form the Glutamine amidotransferase type-1 domain. Residue C114 is the Nucleophile of the active site. Active-site residues include H201 and E203. Residues 228–426 (WTTAAFIEEA…LGLPEEIVQR (199 aa)) form the GMPS ATP-PPase domain. 255–261 (SGGVDSS) contacts ATP.

As to quaternary structure, homodimer.

The catalysed reaction is XMP + L-glutamine + ATP + H2O = GMP + L-glutamate + AMP + diphosphate + 2 H(+). The protein operates within purine metabolism; GMP biosynthesis; GMP from XMP (L-Gln route): step 1/1. Its function is as follows. Catalyzes the synthesis of GMP from XMP. This Gloeobacter violaceus (strain ATCC 29082 / PCC 7421) protein is GMP synthase [glutamine-hydrolyzing].